The primary structure comprises 675 residues: Polyphosphate kinase (675 aa).

Residue N42 participates in ATP binding. Residues R372 and R401 each coordinate Mg(2+). The active-site Phosphohistidine intermediate is the H431. ATP contacts are provided by Y464, R558, and H586.

This sequence belongs to the polyphosphate kinase 1 (PPK1) family. It depends on Mg(2+) as a cofactor. Post-translationally, an intermediate of this reaction is the autophosphorylated ppk in which a phosphate is covalently linked to a histidine residue through a N-P bond.

The catalysed reaction is [phosphate](n) + ATP = [phosphate](n+1) + ADP. Functionally, catalyzes the reversible transfer of the terminal phosphate of ATP to form a long-chain polyphosphate (polyP). In Helicobacter pylori (strain J99 / ATCC 700824) (Campylobacter pylori J99), this protein is Polyphosphate kinase.